The primary structure comprises 279 residues: Protein NipSnap homolog 1 (279 aa).

It belongs to the NipSnap family.

The protein resides in the mitochondrion matrix. Functionally, protein involved in mitophagy. Accumulates on the mitochondria surface in response to mitochondrial depolarization and acts as a 'eat me' signal by recruiting proteins involved in selective autophagy. This is Protein NipSnap homolog 1 from Danio rerio (Zebrafish).